Here is a 772-residue protein sequence, read N- to C-terminus: A type blood N-acetyl-alpha-D-galactosamine deacetylase (772 aa).

Positions 1–27 (MRNRRKAVSLLTGLLVTAQLFPTAALA) are cleaved as a signal peptide. Substrate contacts are provided by Ser-87 and His-123. Asp-126 is a binding site for a divalent metal cation. The deacetylase activity stretch occupies residues 180-402 (WSKPTSDAER…WRIGYAENSF (223 aa)). Position 236 (Tyr-236) interacts with substrate. His-278 is an a divalent metal cation binding site. One can recognise an F5/8 type C domain in the interval 494 to 605 (SDDLEIAVVE…KDLVASGSDW (112 aa)). The tract at residues 502–765 (VENPYTLIPQ…VCVSPVVDFD (264 aa)) is CBM32 carbohydrate-binding domain. A not required for activity on soluble substrates region spans residues 515-772 (TATATSVYGG…DFDYFSYVGE (258 aa)).

Requires a divalent metal cation as cofactor.

The enzyme catalyses an N-acetyl-alpha-D-galactosaminyl-(1-&gt;3)-[alpha-L-fucosyl-(1-&gt;2)]-beta-D-galactosyl derivative + H2O = an alpha-D-galactosaminyl-(1-&gt;3)-[alpha-L-fucosyl-(1-&gt;2)]-beta-D-galactosyl derivative + acetate. With respect to regulation, inhibited by EDTA. One of an enzyme pair that work together to convert the A antigen to the H antigen of the O blood type, which together release galactosamine. Catalyzes the first step in the conversion, generating the substrate for the subsequent enzyme (FpGalNase, AC P0DTR5). Works on many different A antigen subtypes. Glu-90 probably activates a nucleophilic water molecule to start the deacetylation reaction. The sequence is that of A type blood N-acetyl-alpha-D-galactosamine deacetylase from Flavonifractor plautii (Fusobacterium plautii).